Reading from the N-terminus, the 209-residue chain is Uracil phosphoribosyltransferase (209 aa).

5-phospho-alpha-D-ribose 1-diphosphate-binding positions include arginine 79, arginine 104, and 131-139 (DPMLATGGS). Uracil-binding positions include isoleucine 194 and 199–201 (GDA). Aspartate 200 is a 5-phospho-alpha-D-ribose 1-diphosphate binding site.

This sequence belongs to the UPRTase family. Mg(2+) is required as a cofactor.

It catalyses the reaction UMP + diphosphate = 5-phospho-alpha-D-ribose 1-diphosphate + uracil. It functions in the pathway pyrimidine metabolism; UMP biosynthesis via salvage pathway; UMP from uracil: step 1/1. Its activity is regulated as follows. Allosterically activated by GTP. In terms of biological role, catalyzes the conversion of uracil and 5-phospho-alpha-D-ribose 1-diphosphate (PRPP) to UMP and diphosphate. This Clostridium kluyveri (strain NBRC 12016) protein is Uracil phosphoribosyltransferase.